The sequence spans 335 residues: Homeobox protein unc-39 (335 aa).

Disordered stretches follow at residues 27–56 and 269–294; these read FTSS…GGPP and RRQR…NGGS. A compositionally biased stretch (low complexity) spans 28–41; it reads TSSSNSNTSNSSTS. Positions 42–53 are enriched in polar residues; sequence PSHISDQFSSSG. Positions 225–277 form a DNA-binding region, homeobox; that stretch reads KDSSRKFLKQFFRNVSEYPTQEQKREISRATGLKIVQISNWFKNRRQRDKSNN. The span at 276–294 shows a compositional bias: low complexity; it reads NNSAKCSPPSSSSSTNGGS.

The protein belongs to the SIX/Sine oculis homeobox family.

It is found in the nucleus. In terms of biological role, probable transcription factor required for differentiation and migration of neuronal cells, such as RID and CAN neurons. Specifically, plays a role in the terminal differentiation of RID peptidergic neurons. Also required for CAN neuron axon guidance. This is Homeobox protein unc-39 from Caenorhabditis elegans.